A 578-amino-acid polypeptide reads, in one-letter code: Zinc finger protein with KRAB and SCAN domains 8 (578 aa).

The segment at 1–20 (MAEESRKPSAPSPPDQTPEE) is disordered. Phosphoserine is present on S12. K26 participates in a covalent cross-link: Glycyl lysine isopeptide (Lys-Gly) (interchain with G-Cter in SUMO2). The SCAN box domain maps to 51–133 (RLRFRQLCYQ…TLLEDLERQI (83 aa)). The segment at 158–205 (ASAPEPPNTQLQSEATQHKSPVPQESQERSMSTSQSPTRSQKGSSGDQ) is disordered. Over residues 165-205 (NTQLQSEATQHKSPVPQESQERSMSTSQSPTRSQKGSSGDQ) the composition is skewed to polar residues. Residues K176 and K199 each participate in a glycyl lysine isopeptide (Lys-Gly) (interchain with G-Cter in SUMO2) cross-link. S201 carries the phosphoserine modification. The KRAB domain maps to 220–316 (EKIEDMAVSL…GRLERQRGNP (97 aa)). Glycyl lysine isopeptide (Lys-Gly) (interchain with G-Cter in SUMO2) cross-links involve residues K221, K272, and K288. 2 consecutive C2H2-type zinc fingers follow at residues 322-344 (HKCDECGKSFAQSSGLVRHWRIH) and 350-372 (YQCNVCGKAFSYRSALLSHQDIH). Residues K374 and K376 each participate in a glycyl lysine isopeptide (Lys-Gly) (interchain with G-Cter in SUMO2) cross-link. 7 consecutive C2H2-type zinc fingers follow at residues 378–400 (YHCKECGKAFSQNTGLILHQRIH), 406–428 (YQCNQCGKAFSQSAGLILHQRIH), 434–456 (YECNECGKAFSHSSHLIGHQRIH), 462–484 (YECDECGKTFRRSSHLIGHQRSH), 490–512 (YKCNECGRAFSQKSGLIEHQRIH), 518–540 (YKCKECGKAFNGNTGLIQHLRIH), and 546–568 (YQCNECGKAFIQRSSLIRHQRIH). Glycyl lysine isopeptide (Lys-Gly) (interchain with G-Cter in SUMO2) cross-links involve residues K413 and K441. A Glycyl lysine isopeptide (Lys-Gly) (interchain with G-Cter in SUMO2) cross-link involves residue K502. K572 is covalently cross-linked (Glycyl lysine isopeptide (Lys-Gly) (interchain with G-Cter in SUMO2)).

This sequence belongs to the krueppel C2H2-type zinc-finger protein family.

It localises to the nucleus. Functionally, may be involved in transcriptional regulation. The chain is Zinc finger protein with KRAB and SCAN domains 8 (ZKSCAN8) from Pan paniscus (Pygmy chimpanzee).